A 370-amino-acid polypeptide reads, in one-letter code: tRNA (guanine(9)-/adenine(9)-N1)-methyltransferase (370 aa).

The SAM-dependent MTase TRM10-type domain occupies 87–292 (TPEELREKLP…KELPKRATRY (206 aa)).

This sequence belongs to the class IV-like SAM-binding methyltransferase superfamily. TRM10 family.

The protein resides in the cytoplasm. It catalyses the reaction adenosine(9) in tRNA + S-adenosyl-L-methionine = N(1)-methyladenosine(9) in tRNA + S-adenosyl-L-homocysteine + H(+). It carries out the reaction guanosine(9) in tRNA + S-adenosyl-L-methionine = N(1)-methylguanosine(9) in tRNA + S-adenosyl-L-homocysteine + H(+). Its function is as follows. Catalyzes the S-adenosyl-L-methionine-dependent formation of either N(1)-methyladenine or N(1)-methylguanine at position 9 (m1A9 or m1G9) in tRNA. The sequence is that of tRNA (guanine(9)-/adenine(9)-N1)-methyltransferase from Thermococcus kodakarensis (strain ATCC BAA-918 / JCM 12380 / KOD1) (Pyrococcus kodakaraensis (strain KOD1)).